Consider the following 1394-residue polypeptide: DNA-directed RNA polymerase subunit beta'' (1394 aa).

Residues Cys-224, Cys-295, Cys-302, and Cys-305 each coordinate Zn(2+).

This sequence belongs to the RNA polymerase beta' chain family. RpoC2 subfamily. As to quaternary structure, in plastids the minimal PEP RNA polymerase catalytic core is composed of four subunits: alpha, beta, beta', and beta''. When a (nuclear-encoded) sigma factor is associated with the core the holoenzyme is formed, which can initiate transcription. Requires Zn(2+) as cofactor.

It is found in the plastid. Its subcellular location is the chloroplast. It carries out the reaction RNA(n) + a ribonucleoside 5'-triphosphate = RNA(n+1) + diphosphate. Functionally, DNA-dependent RNA polymerase catalyzes the transcription of DNA into RNA using the four ribonucleoside triphosphates as substrates. The chain is DNA-directed RNA polymerase subunit beta'' from Cucumis sativus (Cucumber).